Here is a 562-residue protein sequence, read N- to C-terminus: Formate--tetrahydrofolate ligase (562 aa).

71–78 (TPAGEGKS) is an ATP binding site.

The protein belongs to the formate--tetrahydrofolate ligase family.

The enzyme catalyses (6S)-5,6,7,8-tetrahydrofolate + formate + ATP = (6R)-10-formyltetrahydrofolate + ADP + phosphate. Its pathway is one-carbon metabolism; tetrahydrofolate interconversion. In Bacillus cereus (strain Q1), this protein is Formate--tetrahydrofolate ligase.